We begin with the raw amino-acid sequence, 313 residues long: MSGIDPKSFGKVAVLLGGASAEREVSLNSGRLVLQGLRDAGVDAYAFDPAERPLAALKDEGFVRAFNALHGGYGENGQIQGALDFYGIRYTGSGVLGSALGLDKFRTKLVWQQLGIPTPPFEAVLRGDDYAARAQGIVAKLGLPLFVKPASEGSSVAVIKVKTADALVPALEEAVKFDKIVVVEKSIEGGGEYTACIAGDLDLPIIRIVPAGEFYDYHAKYIANDTQYMIPCGIAAEEEARLKKLARQAFDVLGCTDWGRADFMLDGEGNAYFLEVNTAPGMTDHSLPPKAARAVGISYQELVVKVLALTLKD.

One can recognise an ATP-grasp domain in the interval 108 to 308 (KLVWQQLGIP…YQELVVKVLA (201 aa)). An ATP-binding site is contributed by 138 to 193 (VAKLGLPLFVKPASEGSSVAVIKVKTADALVPALEEAVKFDKIVVVEKSIEGGGEY). Mg(2+)-binding residues include Asp-262, Glu-275, and Asn-277.

The protein belongs to the D-alanine--D-alanine ligase family. Mg(2+) is required as a cofactor. Requires Mn(2+) as cofactor.

Its subcellular location is the cytoplasm. It carries out the reaction 2 D-alanine + ATP = D-alanyl-D-alanine + ADP + phosphate + H(+). It participates in cell wall biogenesis; peptidoglycan biosynthesis. Functionally, cell wall formation. In Paraburkholderia phymatum (strain DSM 17167 / CIP 108236 / LMG 21445 / STM815) (Burkholderia phymatum), this protein is D-alanine--D-alanine ligase.